We begin with the raw amino-acid sequence, 257 residues long: Transmembrane protein C257L (257 aa).

2 consecutive transmembrane segments (helical) span residues Leu-123 to Leu-143 and Met-163 to Val-183.

The protein belongs to the asfivirus C257R family.

It is found in the host membrane. Its subcellular location is the virion. The chain is Transmembrane protein C257L from African swine fever virus (strain Badajoz 1971 Vero-adapted) (Ba71V).